A 113-amino-acid chain; its full sequence is Crustacean hyperglycemic hormones B (113 aa).

A signal peptide spans 1–26 (MVAFRMMSMALLVVVASSWWASPVEA). Disulfide bonds link C46–C82, C62–C78, and C65–C91. V111 carries the valine amide modification.

Belongs to the arthropod CHH/MIH/GIH/VIH hormone family. In terms of tissue distribution, expressed at a constant level in the eyestalks of juveniles and mature females. A low level expression is seen in the central nervous system.

It localises to the secreted. In terms of biological role, hormone found in the sinus gland of isopods and decapods which controls the blood sugar level. Has a secretagogue action over the amylase released from the midgut gland. May act as a stress hormone and may be involved in the control of molting and reproduction. The protein is Crustacean hyperglycemic hormones B of Metapenaeus ensis (Greasyback shrimp).